A 161-amino-acid chain; its full sequence is Ragulator complex protein LAMTOR1 (161 aa).

Positions M1–L43 are disordered. The N-myristoyl glycine moiety is linked to residue G2. Residues C3 and C4 are each lipidated (S-palmitoyl cysteine). K20 is covalently cross-linked (Glycyl lysine isopeptide (Lys-Gly) (interchain with G-Cter in ubiquitin)). At S27 the chain carries Phosphoserine. A Glycyl lysine isopeptide (Lys-Gly) (interchain with G-Cter in ubiquitin) cross-link involves residue K31. S42 and S56 each carry phosphoserine. K60 is covalently cross-linked (Glycyl lysine isopeptide (Lys-Gly) (interchain with G-Cter in ubiquitin)). Residue S98 is modified to Phosphoserine. Residues K103 and K104 each participate in a glycyl lysine isopeptide (Lys-Gly) (interchain with G-Cter in ubiquitin) cross-link. Residues S121–P161 are interaction with LAMTOR2 and LAMTOR3. S141 bears the Phosphoserine mark.

Belongs to the LAMTOR1 family. In terms of assembly, part of the Ragulator complex composed of LAMTOR1, LAMTOR2, LAMTOR3, LAMTOR4 and LAMTOR5. LAMTOR4 and LAMTOR5 form a heterodimer that interacts, through LAMTOR1, with a LAMTOR2, LAMTOR3 heterodimer. Interacts with LAMTOR2 and LAMTOR3; the interaction is direct. The Ragulator complex interacts with both the mTORC1 complex and heterodimers constituted of the Rag GTPases RagA/RRAGA, RagB/RRAGB, RagC/RRAGC and RagD/RRAGD; regulated by amino acid availability. The Ragulator complex interacts with SLC38A9; the probable amino acid sensor. Component of the lysosomal folliculin complex (LFC), composed of FLCN, FNIP1 (or FNIP2), RagA/RRAGA or RagB/RRAGB GDP-bound, RagC/RRAGC or RagD/RRAGD GTP-bound, and Ragulator. Associates with the lysosomal V-ATPase complex; interaction promotes the guanine nucleotide exchange factor (GEF) of the Ragulator complex. Interacts with MMP14. Interacts with CDKN1B; prevents the interaction of CDKN1B with RHOA leaving RHOA in a form accessible to activation by ARHGEF2. Interacts with PIP4P1. N-terminal myristoylation and palmitoylation mediates its recruitment to lysosome membranes, thereby promoting localization of the Ragulator complex to lysosomes. N-myristoylation by NMT1 is required for palmitoylation at Cys-3 and Cys-4. May be palmitoylated by ZDHHC3. Post-translationally, ubiquitinated at Lys-60, Lys-103 and Lys-104 by UBE3A, promoting its degradation by the proteasome. Ubiquitination at Lys-20 impairs the association with the lysosomal V-ATPase complex. Deubiquitination at Lys-20 by USP32 promotes the association with the lysosomal V-ATPase complex and subsequent activation of the mTORC1 complex.

The protein resides in the lysosome membrane. Its subcellular location is the late endosome membrane. Key component of the Ragulator complex, a multiprotein complex involved in amino acid sensing and activation of mTORC1, a signaling complex promoting cell growth in response to growth factors, energy levels, and amino acids. Activated by amino acids through a mechanism involving the lysosomal V-ATPase, the Ragulator plays a dual role for the small GTPases Rag (RagA/RRAGA, RagB/RRAGB, RagC/RRAGC and/or RagD/RRAGD): it (1) acts as a guanine nucleotide exchange factor (GEF), activating the small GTPases Rag and (2) mediates recruitment of Rag GTPases to the lysosome membrane. Activated Ragulator and Rag GTPases function as a scaffold recruiting mTORC1 to lysosomes where it is in turn activated. LAMTOR1 is directly responsible for anchoring the Ragulator complex to the lysosomal membrane. LAMTOR1 wraps around the other subunits of the Ragulator complex to hold them in place and interacts with the Rag GTPases, thereby playing a key role in the recruitment of the mTORC1 complex to lysosomes. Also involved in the control of embryonic stem cells differentiation via non-canonical RagC/RRAGC and RagD/RRAGD activation: together with FLCN, it is necessary to recruit and activate RagC/RRAGC and RagD/RRAGD at the lysosomes, and to induce exit of embryonic stem cells from pluripotency via non-canonical, mTOR-independent TFE3 inactivation. Also required for late endosomes/lysosomes biogenesis it may regulate both the recycling of receptors through endosomes and the MAPK signaling pathway through recruitment of some of its components to late endosomes. May be involved in cholesterol homeostasis regulating LDL uptake and cholesterol release from late endosomes/lysosomes. May also play a role in RHOA activation. The chain is Ragulator complex protein LAMTOR1 from Homo sapiens (Human).